The primary structure comprises 177 residues: Nucleoside triphosphate/diphosphate phosphatase (177 aa).

R23 acts as the Proton donor in catalysis. Mg(2+)-binding residues include N87, D103, D105, D107, D120, and E123.

The protein belongs to the Ntdp family. Requires Mg(2+) as cofactor.

It catalyses the reaction a ribonucleoside 5'-triphosphate + H2O = a ribonucleoside 5'-diphosphate + phosphate + H(+). The catalysed reaction is a ribonucleoside 5'-diphosphate + H2O = a ribonucleoside 5'-phosphate + phosphate + H(+). In terms of biological role, has nucleoside phosphatase activity towards nucleoside triphosphates and nucleoside diphosphates. This Streptococcus pneumoniae (strain ATCC 700669 / Spain 23F-1) protein is Nucleoside triphosphate/diphosphate phosphatase.